Reading from the N-terminus, the 513-residue chain is ATP synthase subunit alpha (513 aa).

Residue 169 to 176 (GDRQTGKT) coordinates ATP.

The protein belongs to the ATPase alpha/beta chains family. F-type ATPases have 2 components, CF(1) - the catalytic core - and CF(0) - the membrane proton channel. CF(1) has five subunits: alpha(3), beta(3), gamma(1), delta(1), epsilon(1). CF(0) has three main subunits: a(1), b(2) and c(9-12). The alpha and beta chains form an alternating ring which encloses part of the gamma chain. CF(1) is attached to CF(0) by a central stalk formed by the gamma and epsilon chains, while a peripheral stalk is formed by the delta and b chains.

The protein resides in the cell inner membrane. The catalysed reaction is ATP + H2O + 4 H(+)(in) = ADP + phosphate + 5 H(+)(out). Its function is as follows. Produces ATP from ADP in the presence of a proton gradient across the membrane. The alpha chain is a regulatory subunit. The polypeptide is ATP synthase subunit alpha (Shewanella sp. (strain ANA-3)).